The sequence spans 681 residues: PTS system glucose-specific EIICBA component (681 aa).

Positions 3-414 (KKLFGQLQRI…LKYKTPGRED (412 aa)) constitute a PTS EIIC type-1 domain. Helical transmembrane passes span 16–36 (LMLP…GTAM), 73–93 (MIFA…AAIA), 126–146 (ILGI…GALA), 170–190 (FVPI…ALIW), 199–219 (AFST…FGFI), 273–293 (FMQG…LAIY), 303–323 (VVAG…ITEP), 328–348 (FLFV…LSFL), 355–375 (LHLG…GILP), and 383–403 (VIPV…FLIV). One can recognise a PTS EIIB type-1 domain in the interval 425 to 506 (TELPYAVLEA…QQIMNGQVVE (82 aa)). The active-site Phosphocysteine intermediate; for EIIB activity is cysteine 447. One can recognise a PTS EIIA type-1 domain in the interval 551-655 (DQVFSEKMMG…SDITPIIVTQ (105 aa)). The active-site Tele-phosphohistidine intermediate; for EIIA activity is the histidine 603.

It is found in the cell membrane. It catalyses the reaction N(pros)-phospho-L-histidyl-[protein] + D-glucose(out) = D-glucose 6-phosphate(in) + L-histidyl-[protein]. Functionally, the phosphoenolpyruvate-dependent sugar phosphotransferase system (sugar PTS), a major carbohydrate active transport system, catalyzes the phosphorylation of incoming sugar substrates concomitantly with their translocation across the cell membrane. This system is involved in glucose transport. This is PTS system glucose-specific EIICBA component (ptsG) from Staphylococcus aureus (strain MRSA252).